The primary structure comprises 301 residues: Probable alpha-L-glutamate ligase 1 (301 aa).

The region spanning 104–287 (MQLMSRRGIG…VAGAIIEFVE (184 aa)) is the ATP-grasp domain. ATP is bound by residues Lys141, 178–179 (EY), Asp187, and 211–213 (RSN). Mg(2+) is bound by residues Asp248, Glu260, and Asn262. The Mn(2+) site is built by Asp248, Glu260, and Asn262.

This sequence belongs to the RimK family. Mg(2+) is required as a cofactor. Requires Mn(2+) as cofactor.

The sequence is that of Probable alpha-L-glutamate ligase 1 from Shewanella putrefaciens (strain CN-32 / ATCC BAA-453).